The sequence spans 292 residues: Phosphoenolpyruvate guanylyltransferase (292 aa).

Residues threonine 168, glycine 184, and serine 187 each contribute to the phosphoenolpyruvate site. The segment at 243–292 (PLVAEDSGGSGGESGTSAESGLSVPPGIVGGTQRRIVSDASGPGRAKKYP) is disordered.

The protein belongs to the CofC family.

The catalysed reaction is phosphoenolpyruvate + GTP + H(+) = enolpyruvoyl-2-diphospho-5'-guanosine + diphosphate. It participates in cofactor biosynthesis; coenzyme F420 biosynthesis. Functionally, guanylyltransferase that catalyzes the activation of phosphoenolpyruvate (PEP) as enolpyruvoyl-2-diphospho-5'-guanosine, via the condensation of PEP with GTP. It is involved in the biosynthesis of coenzyme F420, a hydride carrier cofactor. The polypeptide is Phosphoenolpyruvate guanylyltransferase (Frankia casuarinae (strain DSM 45818 / CECT 9043 / HFP020203 / CcI3)).